Here is a 232-residue protein sequence, read N- to C-terminus: Large ribosomal subunit protein uL1 (232 aa).

This sequence belongs to the universal ribosomal protein uL1 family. Part of the 50S ribosomal subunit.

Its function is as follows. Binds directly to 23S rRNA. The L1 stalk is quite mobile in the ribosome, and is involved in E site tRNA release. In terms of biological role, protein L1 is also a translational repressor protein, it controls the translation of the L11 operon by binding to its mRNA. The chain is Large ribosomal subunit protein uL1 from Bordetella petrii (strain ATCC BAA-461 / DSM 12804 / CCUG 43448).